A 436-amino-acid polypeptide reads, in one-letter code: Ribulose bisphosphate carboxylase large chain (436 aa).

2 residues coordinate substrate: Asn-104 and Thr-154. Catalysis depends on Lys-156, which acts as the Proton acceptor. Residue Lys-158 participates in substrate binding. Lys-182, Asp-184, and Glu-185 together coordinate Mg(2+). At Lys-182 the chain carries N6-carboxylysine. The Proton acceptor role is filled by His-275. Substrate-binding residues include Arg-276, His-308, and Ser-360.

Belongs to the RuBisCO large chain family. Type I subfamily. In terms of assembly, heterohexadecamer of 8 large chains and 8 small chains. The cofactor is Mg(2+).

The protein localises to the plastid. It is found in the chloroplast. The catalysed reaction is 2 (2R)-3-phosphoglycerate + 2 H(+) = D-ribulose 1,5-bisphosphate + CO2 + H2O. The enzyme catalyses D-ribulose 1,5-bisphosphate + O2 = 2-phosphoglycolate + (2R)-3-phosphoglycerate + 2 H(+). Its function is as follows. RuBisCO catalyzes two reactions: the carboxylation of D-ribulose 1,5-bisphosphate, the primary event in carbon dioxide fixation, as well as the oxidative fragmentation of the pentose substrate in the photorespiration process. Both reactions occur simultaneously and in competition at the same active site. The polypeptide is Ribulose bisphosphate carboxylase large chain (Euglena myxocylindracea).